The sequence spans 91 residues: Non-specific lipid-transfer protein 1 (91 aa).

4 cysteine pairs are disulfide-bonded: cysteine 3–cysteine 50, cysteine 13–cysteine 27, cysteine 28–cysteine 73, and cysteine 48–cysteine 87.

The protein belongs to the plant LTP family.

In terms of biological role, plant non-specific lipid-transfer proteins transfer phospholipids as well as galactolipids across membranes. May play a role in wax or cutin deposition in the cell walls of expanding epidermal cells and certain secretory tissues. This chain is Non-specific lipid-transfer protein 1, found in Prunus persica (Peach).